Reading from the N-terminus, the 338-residue chain is Bifunctional methylenetetrahydrofolate dehydrogenase/cyclohydrolase 2, mitochondrial (338 aa).

Residues 89-93 (YVRNK) and 136-138 (VQL) contribute to the substrate site. NAD(+) contacts are provided by residues 205 to 207 (GRS) and arginine 238. Substrate is bound at residue 314–318 (PGGVG).

This sequence belongs to the tetrahydrofolate dehydrogenase/cyclohydrolase family. The cofactor is Mg(2+). In terms of tissue distribution, widely expressed.

The protein resides in the mitochondrion inner membrane. The catalysed reaction is (6R)-5,10-methylene-5,6,7,8-tetrahydrofolate + NAD(+) = (6R)-5,10-methenyltetrahydrofolate + NADH. It carries out the reaction (6R)-5,10-methenyltetrahydrofolate + H2O = (6R)-10-formyltetrahydrofolate + H(+). It catalyses the reaction (6R)-5,10-methylene-5,6,7,8-tetrahydrofolate + NADP(+) = (6R)-5,10-methenyltetrahydrofolate + NADPH. It participates in one-carbon metabolism; tetrahydrofolate interconversion. Bifunctional mitochondrial folate-interconverting enzyme that has both NAD/NADP-dependent methylenetetrahydrofolate dehydrogenase and methenyltetrahydrofolate cyclohydrolase activities. The sequence is that of Bifunctional methylenetetrahydrofolate dehydrogenase/cyclohydrolase 2, mitochondrial from Mus musculus (Mouse).